We begin with the raw amino-acid sequence, 395 residues long: Bifunctional fatty acid conjugase/Delta(12)-oleate desaturase (395 aa).

Transmembrane regions (helical) follow at residues 73–93 and 97–117; these read FALAFLFYHSAVTYIPLLPKP and MAWPVYWFLQGSNMLGIWVIA. Positions 118-122 match the Histidine box-1 motif; the sequence is HECGH. Residues 130-150 form a helical membrane-spanning segment; it reads WVNDAVGFFLHTSLLVPYFPF. Positions 154-158 match the Histidine box-2 motif; the sequence is HRRHH. 3 helical membrane-spanning segments follow: residues 192–212, 236–256, and 264–284; these read VLTLTLTLLVGWPSYLAFNAS, FWVHVSNIGILAIYYILYRLA, and LLSIYGVPVLILNAFVVLITF. The Histidine box-3 motif lies at 328–332; sequence HVIHH.

It belongs to the fatty acid desaturase type 1 family.

It is found in the membrane. It carries out the reaction a (9Z,12Z)-octadecadienoyl-containing glycerolipid + 2 Fe(II)-[cytochrome b5] + O2 + 2 H(+) = a (9Z,11E,13Z)-octadeca-9,11,13-trienoyl-containing glycerolipid + 2 Fe(III)-[cytochrome b5] + 2 H2O. It participates in lipid metabolism; polyunsaturated fatty acid biosynthesis. Functionally, converts a single cis double bond at position 12 of linoleate incorporated into phosphatidylcholine into conjugated 11-trans and 13-cis double bonds. Produces punicic acid (18:3(9Z,11E,13Z)) from linoleic acid and conjugated octadecatetraenoic fatty acid from gamma-linolenic acid. No activity with cis- and trans-vaccenic acid, alpha-linolenic acid or homo-gamma-linolenic acid. 16:2(9Z,12Z), 18:3(9Z,12Z,15Z) and 18:2(9Z,12Z) are substrates for the conjugase to form trans-Delta(11) and cis-Delta(13) double bonds. No activity on the cis-Delta(9) double bonds of oleic and palmitoleic acids. The chain is Bifunctional fatty acid conjugase/Delta(12)-oleate desaturase from Punica granatum (Pomegranate).